The primary structure comprises 279 residues: uncharacterized protein (279 aa).

A run of 3 helical transmembrane segments spans residues 1–21, 38–58, and 131–151; these read MGFIKSTLLATVTVFVGLCGI, FACHTFLAISSAYGVIASVVA, and SLRYVPILGWFMILSDVVFID.

It belongs to the 1-acyl-sn-glycerol-3-phosphate acyltransferase family.

The protein resides in the endoplasmic reticulum membrane. This is an uncharacterized protein from Schizosaccharomyces pombe (strain 972 / ATCC 24843) (Fission yeast).